We begin with the raw amino-acid sequence, 254 residues long: MRAIIVDDEPLARNELHYLLNQINHFEKIDKAENVSETLELLLYDDYDVIFLDINLMDESGLDLANKIKKMKHAPFIIFATAHDTFAVKAFELDAIDYILKPFEQQRIAQAVHKVEQALGQTTEHHSDSYTTASMDTQNNEKTKTSKVLPIEVNERIHIINLDDIIAVSVNNGITTINTTLDDFETSEPLSHYEKKIETQNFMRIHRATLINKSHIQTIEHWFNYTYQLTMTNQLRFQVSRSYMKTFKQMMGLN.

A Response regulatory domain is found at 2-116 (RAIIVDDEPL…RIAQAVHKVE (115 aa)). D53 carries the post-translational modification 4-aspartylphosphate. The disordered stretch occupies residues 120 to 143 (GQTTEHHSDSYTTASMDTQNNEKT). The segment covering 129–138 (SYTTASMDTQ) has biased composition (polar residues). The HTH LytTR-type domain maps to 149-253 (LPIEVNERIH…MKTFKQMMGL (105 aa)).

Phosphorylated by LytS.

It is found in the cytoplasm. Its function is as follows. Member of the two-component regulatory system LytR/LytS that probably regulates genes involved in cell wall metabolism. The protein is Sensory transduction protein LytR (lytR) of Staphylococcus saprophyticus subsp. saprophyticus (strain ATCC 15305 / DSM 20229 / NCIMB 8711 / NCTC 7292 / S-41).